Reading from the N-terminus, the 201-residue chain is MSSLRQSEIKRKTNETDISVFINLDGNGISEIDTGIPFLDHMLHQISSHGLFDLKIRAIGDTHIDDHHTNEDVGIALGKAFSKALGERKGICRFGHFFAPLDEALVQVTLDCSGRPHLSYDLQLKAPRIGNYDTELVKEFFIAFVNNSGITLHINQIRGSNSHHIVEACFKAFSRAMRMATEIDLRRSGSIPSSKGMLENQ.

The protein belongs to the imidazoleglycerol-phosphate dehydratase family.

The protein resides in the cytoplasm. It carries out the reaction D-erythro-1-(imidazol-4-yl)glycerol 3-phosphate = 3-(imidazol-4-yl)-2-oxopropyl phosphate + H2O. The protein operates within amino-acid biosynthesis; L-histidine biosynthesis; L-histidine from 5-phospho-alpha-D-ribose 1-diphosphate: step 6/9. The sequence is that of Imidazoleglycerol-phosphate dehydratase from Prochlorococcus marinus (strain MIT 9301).